Reading from the N-terminus, the 259-residue chain is MVLIRVLANLLILQLSYAQKSSELIFGGRPCNRNEHRFLALVYSDGNQCSGTLINEEWVLTAAHCEGNKMKIHLGVHSKKVPNKDKQTRVPKEKFFCVSSKTYTKWNKDIMLIRLDRPVSNSKHIAPLNLPSSSPSVGSVCRIMGWGTISPTEVILPDVPQCANINLLSYSVCRAAYPEYGLPATSRTLCAGILEGGKDTCAGDSGGPLICNGQFQGIASWGSTLCGYVREPALYTKVFDHLDWIQSIIAGNTDATCPL.

Residues 1 to 18 (MVLIRVLANLLILQLSYA) form the signal peptide. A propeptide spanning residues 19 to 24 (QKSSEL) is cleaved from the precursor. Positions 25–250 (IFGGRPCNRN…HLDWIQSIIA (226 aa)) constitute a Peptidase S1 domain. Intrachain disulfides connect Cys31–Cys162, Cys49–Cys65, Cys97–Cys257, Cys141–Cys211, Cys173–Cys190, and Cys201–Cys226. Active-site charge relay system residues include His64 and Asp109. Residue Ser205 is the Charge relay system of the active site.

It belongs to the peptidase S1 family. Snake venom subfamily. Monomer. Expressed by the venom gland.

It localises to the secreted. In terms of biological role, snake venom serine protease that may act in the hemostasis system of the prey. This Crotalus adamanteus (Eastern diamondback rattlesnake) protein is Snake venom serine proteinase 2.